The sequence spans 355 residues: MDHVYKGQLQAYALQHNLELPVYANEREGPPHAPRFRCNVTFCGQTFQSSEFFPTLKSAEHAAAKIAVASLTPQSPEGIDVAYKNLLQEIAQKESSLLPFYATATSGPSHAPTFTSTVEFAGKVFSGEEAKTKKLAEMSAAKVAFMSIKNGNSNQTGSPTLPSERQEDVNSNVKSSPQEIHSQPSSKVVMTPDTPSKGIKVNEDEFPDLHDAPASNAKEINVALNEPENPTNDGTLSALTTDGMKMNIASSSLPIPHNPTNVITLNAPAANGIKRNIAACSSWMPQNPTNDGSETSSCVVDESEKKKLIMGTGHLSIPTGQHVVCRPWNPEITLPQDAEMLFRDDKFIAYRLVKP.

DRBM domains lie at 4-73 (VYKG…SLTP) and 82-150 (AYKN…SIKN). The span at 149–188 (KNGNSNQTGSPTLPSERQEDVNSNVKSSPQEIHSQPSSKV) shows a compositional bias: polar residues. A disordered region spans residues 149–193 (KNGNSNQTGSPTLPSERQEDVNSNVKSSPQEIHSQPSSKVVMTPD).

In terms of assembly, heterodimer with DRB1 or DRB5. Interacts with DCL4 and cauliflower mosaic virus (CaMV) transactivator/viroplasmin protein. Interaction with CaMV transactivator/viroplasmin protein inhibits RNA silencing ability of DRB4. As to expression, expressed in roots, leaf vasculature, shoot apical meristem (SAM) and developing anthers.

The protein localises to the nucleus. In terms of biological role, double-stranded RNA-binding protein involved in RNA-mediated post-transcriptional gene silencing (PTGS). Functions in the trans-acting small interfering RNAs (ta-siRNAs) biogenesis by binding and assisting DICER-LIKE 4 (DCL4). Required for DCL4 activity. Required for the 21 nucleotide ta-siRNAs production of the TAS3 transcript in leaves but not in flowers. Plays an important role in silencing RNA of both DNA and RNA viruses. Involved with argonaute 7 (AGO7) and RDR6 in turnip crinkle virus (TCV) silencing. May not be directly involved in viral siRNA production. May stabilize the 21 nucleotide viral siRNAs and deliver them to the RISC complex. Targeted by the viral silencing suppressor (VSR) transactivator/viroplasmin (TAV) protein of the cauliflower mosaic virus (CaMV) that inactivates DRB4 function in RNA silencing. Probably not involved in the guide strand selection from RNA duplexes. Involved in leaf morphology through its function in ta-siRNA-mediated silencing. The protein is Double-stranded RNA-binding protein 4 (DBR4) of Arabidopsis thaliana (Mouse-ear cress).